A 336-amino-acid chain; its full sequence is 25S rRNA (uridine(2634)-N(3))-methyltransferase (336 aa).

The tract at residues 286–307 (PGYHHRRTNSEQDTTKPAKERD) is disordered. The span at 293–307 (TNSEQDTTKPAKERD) shows a compositional bias: basic and acidic residues.

It belongs to the class I-like SAM-binding methyltransferase superfamily. BMT5 family.

The protein localises to the nucleus. The protein resides in the nucleolus. The catalysed reaction is uridine(2634) in 25S rRNA + S-adenosyl-L-methionine = N(3)-methyluridine(2634) in 25S rRNA + S-adenosyl-L-homocysteine + H(+). In terms of biological role, S-adenosyl-L-methionine-dependent methyltransferase that specifically methylates the N(3) position of uridine 2634 (m3U2634) in 25S rRNA. This Saccharomyces cerevisiae (strain ATCC 204508 / S288c) (Baker's yeast) protein is 25S rRNA (uridine(2634)-N(3))-methyltransferase (BMT5).